We begin with the raw amino-acid sequence, 202 residues long: Orotate phosphoribosyltransferase (202 aa).

5-phospho-alpha-D-ribose 1-diphosphate-binding positions include Arg94, Lys98, His100, and 120–128 (EDLISTGGS). Ser124 contributes to the orotate binding site.

This sequence belongs to the purine/pyrimidine phosphoribosyltransferase family. PyrE subfamily. Homodimer. The cofactor is Mg(2+).

The catalysed reaction is orotidine 5'-phosphate + diphosphate = orotate + 5-phospho-alpha-D-ribose 1-diphosphate. It functions in the pathway pyrimidine metabolism; UMP biosynthesis via de novo pathway; UMP from orotate: step 1/2. In terms of biological role, catalyzes the transfer of a ribosyl phosphate group from 5-phosphoribose 1-diphosphate to orotate, leading to the formation of orotidine monophosphate (OMP). The chain is Orotate phosphoribosyltransferase from Oceanobacillus iheyensis (strain DSM 14371 / CIP 107618 / JCM 11309 / KCTC 3954 / HTE831).